A 273-amino-acid chain; its full sequence is HTH-type transcriptional activator RhaS (273 aa).

Residues 174 to 272 form the HTH araC/xylS-type domain; it reads YQLLDWLQNN…SQSPRDLRSQ (99 aa). 2 consecutive DNA-binding regions (H-T-H motif) follow at residues 191–212 and 239–262; these read PELADRFALPLRTLHRQLKNKT and VTDIAYLCGFGDSNHFSTLFKREF.

As to quaternary structure, binds DNA as a dimer.

It is found in the cytoplasm. Functionally, activates expression of the rhaBAD and rhaT operons. The polypeptide is HTH-type transcriptional activator RhaS (Yersinia pseudotuberculosis serotype I (strain IP32953)).